A 125-amino-acid polypeptide reads, in one-letter code: Alpha-endosulfine (125 aa).

A compositionally biased stretch (basic and acidic residues) spans 1-37 (MSDKYIGDSHLEETGEEKQDSQEKEAVTPEKAEEQKL). Residues 1 to 52 (MSDKYIGDSHLEETGEEKQDSQEKEAVTPEKAEEQKLKAKYPNLGQKPGGSD) form a disordered region. T28 carries the phosphothreonine; by CDK2 modification. The residue at position 67 (S67) is a Phosphoserine; by GWL. Positions 86–107 (GPDKNLVTGDHIPTPQDLPQRK) are disordered. T99 is subject to Phosphothreonine; by CDK2. A Phosphoserine; by PKA modification is found at S109.

The protein belongs to the endosulfine family. As to quaternary structure, interacts (when phosphorylated at Ser-67) with ppp2r2d. Post-translationally, phosphorylation at Ser-67 by gwl during mitosis is essential for interaction with PPP2R2D (PR55-delta) and subsequent inactivation of PP2A. Phosphorylated by PKA.

It localises to the cytoplasm. Functionally, protein phosphatase inhibitor that specifically inhibits protein phosphatase 2A (PP2A) during mitosis. When phosphorylated at Ser-67 during mitosis, specifically interacts with ppp2r2d (PR55-delta) and inhibits its activity, leading to inactivation of PP2A, an essential condition to keep cyclin-B1-CDK1 activity high during M phase. This Xenopus laevis (African clawed frog) protein is Alpha-endosulfine (ensa).